Reading from the N-terminus, the 320-residue chain is Heptaprenyl diphosphate synthase component 2 (320 aa).

Isopentenyl diphosphate-binding residues include lysine 45, arginine 48, and histidine 77. Mg(2+)-binding residues include aspartate 84 and aspartate 88. Arginine 93 is a binding site for all-trans-hexaprenyl diphosphate. Residue arginine 94 participates in isopentenyl diphosphate binding. All-trans-hexaprenyl diphosphate is bound by residues lysine 170, threonine 171, and glutamine 208.

It belongs to the FPP/GGPP synthase family. As to quaternary structure, heterodimer of component I and II. The cofactor is Mg(2+).

It carries out the reaction 4 isopentenyl diphosphate + (2E,6E)-farnesyl diphosphate = all-trans-heptaprenyl diphosphate + 4 diphosphate. In terms of biological role, supplies heptaprenyl diphosphate, the precursor for the side chain of the isoprenoid quinone menaquinone-7 (MQ-7). The protein is Heptaprenyl diphosphate synthase component 2 (hepT) of Geobacillus stearothermophilus (Bacillus stearothermophilus).